A 370-amino-acid chain; its full sequence is Prolactin-releasing peptide receptor (370 aa).

The interval 1-34 (MTSLPPGTTGDPDLFSGPSPAGSTPANQSAEASE) is disordered. Residues 1-62 (MTSLPPGTTG…LQLVHQLKGL (62 aa)) are Extracellular-facing. Residues 21–34 (AGSTPANQSAEASE) show a composition bias toward polar residues. N-linked (GlcNAc...) asparagine glycans are attached at residues Asn-27 and Asn-36. A helical membrane pass occupies residues 63–83 (IVMLYSIVVVVGLVGNCLLVL). Residues 84 to 101 (VIARVRRLHNVTNFLIGN) are Cytoplasmic-facing. The chain crosses the membrane as a helical span at residues 102 to 122 (LALSDVLMCAACVPLTLAYAF). The Extracellular portion of the chain corresponds to 123–126 (EPRG). A helical membrane pass occupies residues 127–147 (WVFGGGLCHLVFFLQPVTVYV). Residues Cys-134 and Cys-211 are joined by a disulfide bond. At 148–175 (SVFTLTTIAVDRYVVLVHPLRRRISLKL) the chain is on the cytoplasmic side. The helical transmembrane segment at 176–196 (SAYAVLGIWALSAVLALPAAV) threads the bilayer. The Extracellular portion of the chain corresponds to 197–223 (HTYHVELKPHDVRLCEEFWGSQERQRQ). A helical membrane pass occupies residues 224-244 (IYAWGLLLGTYLLPLLAILLS). Topologically, residues 245-276 (YVRVSVKLRNRVVPGSVTQSQADWDRARRRRT) are cytoplasmic. A helical membrane pass occupies residues 277 to 297 (FCLLVVVVVVFALCWLPLHIF). The Extracellular portion of the chain corresponds to 298–317 (NLLRDLDPRAIDPYAFGLVQ). The helical transmembrane segment at 318 to 338 (LLCHWLAMSSACYNPFIYAWL) threads the bilayer. The Cytoplasmic segment spans residues 339–370 (HDSFREELRKMLLSWPRKIVPHGQNMTVSVVI). The interval 365 to 370 (TVSVVI) is required for interaction with GRIP1, GRIP2 and PICK1.

Belongs to the G-protein coupled receptor 1 family. In terms of assembly, interacts through its C-terminal region with the PDZ domain-containing proteins GRIP1, GRIP2 and PICK1. Interacts with PDZ domains 4 and 5 of GRIP1 and with the PDZ domain of PICK1. Widely expressed, with highest levels in pituitary, cerebellum, and hypothalamus.

The protein resides in the cell membrane. In terms of biological role, receptor for prolactin-releasing peptide (PrRP). Implicated in lactation, regulation of food intake and pain-signal processing. The polypeptide is Prolactin-releasing peptide receptor (Prlhr) (Rattus norvegicus (Rat)).